The chain runs to 445 residues: GTPase Der (445 aa).

EngA-type G domains are found at residues 3-167 (PVIA…YAGE) and 180-353 (IKIA…AAAM). Residues 9-16 (GRPNVGKS), 56-60 (DTGGF), 119-122 (NKAE), 186-193 (GRPNVGKS), 233-237 (DTAGL), and 298-301 (NKWD) contribute to the GTP site. Residues 354-438 (KKLPTPKLTR…PLRIEFRSST (85 aa)) enclose the KH-like domain.

Belongs to the TRAFAC class TrmE-Era-EngA-EngB-Septin-like GTPase superfamily. EngA (Der) GTPase family. As to quaternary structure, associates with the 50S ribosomal subunit.

Its function is as follows. GTPase that plays an essential role in the late steps of ribosome biogenesis. In Burkholderia pseudomallei (strain 1106a), this protein is GTPase Der.